The primary structure comprises 274 residues: Dermonecrotic toxin SaSicTox-betaIIB1 (274 aa).

Residue His-5 is part of the active site. Glu-25 and Asp-27 together coordinate Mg(2+). His-41 acts as the Nucleophile in catalysis. 2 disulfides stabilise this stretch: Cys-45-Cys-51 and Cys-47-Cys-190. Residue Asp-85 participates in Mg(2+) binding.

This sequence belongs to the arthropod phospholipase D family. Class II subfamily. It depends on Mg(2+) as a cofactor. As to expression, expressed by the venom gland.

The protein localises to the secreted. The catalysed reaction is an N-(acyl)-sphingosylphosphocholine = an N-(acyl)-sphingosyl-1,3-cyclic phosphate + choline. The enzyme catalyses an N-(acyl)-sphingosylphosphoethanolamine = an N-(acyl)-sphingosyl-1,3-cyclic phosphate + ethanolamine. It carries out the reaction a 1-acyl-sn-glycero-3-phosphocholine = a 1-acyl-sn-glycero-2,3-cyclic phosphate + choline. It catalyses the reaction a 1-acyl-sn-glycero-3-phosphoethanolamine = a 1-acyl-sn-glycero-2,3-cyclic phosphate + ethanolamine. Dermonecrotic toxins cleave the phosphodiester linkage between the phosphate and headgroup of certain phospholipids (sphingolipid and lysolipid substrates), forming an alcohol (often choline) and a cyclic phosphate. This toxin acts on sphingomyelin (SM). It may also act on ceramide phosphoethanolamine (CPE), lysophosphatidylcholine (LPC) and lysophosphatidylethanolamine (LPE), but not on lysophosphatidylserine (LPS), and lysophosphatidylglycerol (LPG). It acts by transphosphatidylation, releasing exclusively cyclic phosphate products as second products. Induces dermonecrosis, hemolysis, increased vascular permeability, edema, inflammatory response, and platelet aggregation. This is Dermonecrotic toxin SaSicTox-betaIIB1 from Sicarius albospinosus (Six-eyed crab spider).